The primary structure comprises 350 residues: GTPase Obg (350 aa).

In terms of domain architecture, Obg spans 1–158 (MFIDSVKITL…RLVRLELKLI (158 aa)). One can recognise an OBG-type G domain in the interval 159-339 (ADVGLVGFPN…LKFMLLEEIK (181 aa)). GTP-binding positions include 165–172 (GFPNVGKS), 190–194 (FTTLT), 212–215 (DIPG), 280–283 (SKSD), and 320–322 (SSL). Residues Ser172 and Thr192 each contribute to the Mg(2+) site.

This sequence belongs to the TRAFAC class OBG-HflX-like GTPase superfamily. OBG GTPase family. Monomer. Mg(2+) is required as a cofactor.

The protein resides in the cytoplasm. Its function is as follows. An essential GTPase which binds GTP, GDP and possibly (p)ppGpp with moderate affinity, with high nucleotide exchange rates and a fairly low GTP hydrolysis rate. Plays a role in control of the cell cycle, stress response, ribosome biogenesis and in those bacteria that undergo differentiation, in morphogenesis control. The chain is GTPase Obg from Campylobacter jejuni (strain RM1221).